A 444-amino-acid polypeptide reads, in one-letter code: Signal recognition particle 54 kDa protein (444 aa).

Residues 102–109 (GVQGSGKT), 184–188 (DTAGR), and 244–247 (SKMD) each bind GTP.

The protein belongs to the GTP-binding SRP family. SRP54 subfamily. As to quaternary structure, part of the signal recognition particle protein translocation system, which is composed of SRP and FtsY. Archaeal SRP consists of a 7S RNA molecule of 300 nucleotides and two protein subunits: SRP54 and SRP19.

The protein resides in the cytoplasm. The catalysed reaction is GTP + H2O = GDP + phosphate + H(+). Its function is as follows. Involved in targeting and insertion of nascent membrane proteins into the cytoplasmic membrane. Binds to the hydrophobic signal sequence of the ribosome-nascent chain (RNC) as it emerges from the ribosomes. The SRP-RNC complex is then targeted to the cytoplasmic membrane where it interacts with the SRP receptor FtsY. In Sulfolobus acidocaldarius (strain ATCC 33909 / DSM 639 / JCM 8929 / NBRC 15157 / NCIMB 11770), this protein is Signal recognition particle 54 kDa protein.